The following is an 837-amino-acid chain: Striatin-interacting protein 1 (837 aa).

N-acetylmethionine is present on Met-1. 2 disordered regions span residues 1 to 66 (MEPA…SESP) and 333 to 423 (AASP…KGLP). The span at 18–35 (PQPPPPPPPATAQPPPGA) shows a compositional bias: pro residues. A compositionally biased stretch (basic and acidic residues) spans 47 to 60 (KAREFNRNQRKDSE). Residues Ser-59, Ser-335, and Ser-339 each carry the phosphoserine modification. Over residues 356–377 (KALIKQDNLDAFNERDPYKADD) the composition is skewed to basic and acidic residues. Positions 378-391 (SREEEEENDDDNSL) are enriched in acidic residues. Ser-788 is subject to Phosphoserine. Positions 796–837 (DNCLQSVLGQRVDLPEDFQMNYDLWLEREVFSKPISWEELLQ) are required for STRIPAK core complex formation.

Belongs to the STRIP family. Part of the core of STRIPAK complexes composed of PP2A catalytic and scaffolding subunits, the striatins (PP2A regulatory subunits), the striatin-associated proteins MOB4, STRIP1 and STRIP2, PDCD10 and members of the STE20 kinases, such as STK24 and STK26. The STRIPAK complex can be extended by adapter proteins such as SLMAP:SIKE1, CTTNBP2 or CTTNBP2NL. Interacts with CDC42BPB. Interacts with CTTNBP2NL.

The protein localises to the cytoplasm. In terms of biological role, plays a role in the regulation of cell morphology and cytoskeletal organization. Required in the cortical actin filament dynamics and cell shape. Part of the striatin-interacting phosphatase and kinase (STRIPAK) complexes. STRIPAK complexes have critical roles in protein (de)phosphorylation and are regulators of multiple signaling pathways including Hippo, MAPK, nuclear receptor and cytoskeleton remodeling. Different types of STRIPAK complexes are involved in a variety of biological processes such as cell growth, differentiation, apoptosis, metabolism and immune regulation. The polypeptide is Striatin-interacting protein 1 (STRIP1) (Macaca fascicularis (Crab-eating macaque)).